The primary structure comprises 437 residues: Enolase 2 (437 aa).

Q162 contacts (2R)-2-phosphoglycerate. The active-site Proton donor is the E204. Positions 251, 297, and 324 each coordinate Mg(2+). Positions 349, 378, 379, and 400 each coordinate (2R)-2-phosphoglycerate. Catalysis depends on K349, which acts as the Proton acceptor.

Belongs to the enolase family. It depends on Mg(2+) as a cofactor.

It is found in the cytoplasm. Its subcellular location is the secreted. The protein localises to the cell surface. It catalyses the reaction (2R)-2-phosphoglycerate = phosphoenolpyruvate + H2O. The protein operates within carbohydrate degradation; glycolysis; pyruvate from D-glyceraldehyde 3-phosphate: step 4/5. Functionally, catalyzes the reversible conversion of 2-phosphoglycerate (2-PG) into phosphoenolpyruvate (PEP). It is essential for the degradation of carbohydrates via glycolysis. This chain is Enolase 2, found in Chlorobaculum tepidum (strain ATCC 49652 / DSM 12025 / NBRC 103806 / TLS) (Chlorobium tepidum).